We begin with the raw amino-acid sequence, 134 residues long: Small ribosomal subunit protein uS11 (134 aa).

The protein belongs to the universal ribosomal protein uS11 family. In terms of assembly, part of the 30S ribosomal subunit. Interacts with proteins S7 and S18. Binds to IF-3.

Located on the platform of the 30S subunit, it bridges several disparate RNA helices of the 16S rRNA. Forms part of the Shine-Dalgarno cleft in the 70S ribosome. This is Small ribosomal subunit protein uS11 from Frankia alni (strain DSM 45986 / CECT 9034 / ACN14a).